We begin with the raw amino-acid sequence, 266 residues long: Glucosamine-6-phosphate deaminase (266 aa).

Catalysis depends on Asp72, which acts as the Proton acceptor; for enolization step. Asp141 functions as the For ring-opening step in the catalytic mechanism. The active-site Proton acceptor; for ring-opening step is His143. Glu148 functions as the For ring-opening step in the catalytic mechanism.

This sequence belongs to the glucosamine/galactosamine-6-phosphate isomerase family. NagB subfamily. As to quaternary structure, homohexamer.

It carries out the reaction alpha-D-glucosamine 6-phosphate + H2O = beta-D-fructose 6-phosphate + NH4(+). The protein operates within amino-sugar metabolism; N-acetylneuraminate degradation; D-fructose 6-phosphate from N-acetylneuraminate: step 5/5. Allosterically activated by N-acetylglucosamine 6-phosphate (GlcNAc6P). Its function is as follows. Catalyzes the reversible isomerization-deamination of glucosamine 6-phosphate (GlcN6P) to form fructose 6-phosphate (Fru6P) and ammonium ion. The polypeptide is Glucosamine-6-phosphate deaminase (Klebsiella pneumoniae subsp. pneumoniae (strain ATCC 700721 / MGH 78578)).